Reading from the N-terminus, the 705-residue chain is MIKLYNTCMDFKCLNDVECSHPEKILGPHLEDAYIIRAYIPIARAAFILIDNKKYQMIDNGKVFEYRSDNEINDYKILYIDDSGYEKTIDDPYRFRPEISDYDIYLYGTGRLFEAYKTFGAHLKTIKDVSGCNFVVWAPSALSVSVVGNFNHWTPGMHPMINVNDSGIWALFIPGIKENEVYKFAIKTKNNEIKMKTDPFAFYTEKRPRTGSIVINDDFHWTDNSFKRSENALSIYEMHLGSWKRNNGDYYNYREIADMLIDHLKKTGFNCVEIMPVMEHPLDISWGYQVVNYFAPTSRYGKPDDFKYLVNRLHENNIMVILDFVPAHFPDDDYGLYMFDGTHLYDYEDPRMGRTPDWGTNIFDFGRNGVRSFIASAAVFWIDKYHVDGLRFDAVTSMIYLDFGRKPGEWIPNINGGNINLEAVSLLKEINDYIHNKYYNVITVAEESSTYPGITSESGLNFNYKWNLGWMHDTLDFFHEDPLYRKYRINNLTFSVMYMYSENFILPVSHDEVVYGKGSLYRKMPGNKNEKISNVKLFLSYMFSYPGKKLLFMGNEFAQKNEWNVLSQLSWNDLDDGKYVMELIHDLNNLYKNDFNFYNDKNFSWIDFNDKTNTVISFNRGNAVCIFNFTPVERENYAIGVDYPSRYIEIINTDSKKYNGGNILNESIYACKYPMHGRRYSIEIDLPPLAAVIMEPEDLNGSSGN.

Asp393 acts as the Nucleophile in catalysis. Glu446 functions as the Proton donor in the catalytic mechanism.

Belongs to the glycosyl hydrolase 13 family. GlgB subfamily. Monomer.

The catalysed reaction is Transfers a segment of a (1-&gt;4)-alpha-D-glucan chain to a primary hydroxy group in a similar glucan chain.. It functions in the pathway glycan biosynthesis; glycogen biosynthesis. Its function is as follows. Catalyzes the formation of the alpha-1,6-glucosidic linkages in glycogen by scission of a 1,4-alpha-linked oligosaccharide from growing alpha-1,4-glucan chains and the subsequent attachment of the oligosaccharide to the alpha-1,6 position. The polypeptide is 1,4-alpha-glucan branching enzyme GlgB (Picrophilus torridus (strain ATCC 700027 / DSM 9790 / JCM 10055 / NBRC 100828 / KAW 2/3)).